Consider the following 252-residue polypeptide: Probable phosphatase Shewana3_2794 (252 aa).

Zn(2+) is bound by residues histidine 8, histidine 10, histidine 16, histidine 41, glutamate 74, histidine 102, histidine 132, aspartate 193, and histidine 195.

The protein belongs to the PHP family. Requires Zn(2+) as cofactor.

This chain is Probable phosphatase Shewana3_2794, found in Shewanella sp. (strain ANA-3).